The following is a 505-amino-acid chain: Ikaros family zinc finger protein (505 aa).

4 consecutive C2H2-type zinc fingers follow at residues 18–40 (LTCE…KRSH), 46–68 (FQCN…VKLH), 74–96 (FKCS…IRTH), and 102–128 (YKCN…PGFH). Composition is skewed to polar residues over residues 262-273 (FLNTPSPVTRSA) and 309-327 (RFQH…SQQP). Disordered regions lie at residues 262-296 (FLNT…DIGS) and 309-440 (RFQH…VSGS). The span at 336-345 (ILGGSLGGIC) shows a compositional bias: gly residues. Positions 366–377 (ATSSPSNSCPDS) are enriched in polar residues. Residues 393–406 (GSGSSTSRPNGSTG) show a composition bias toward low complexity. The segment covering 409–419 (HRPEMHQDNGR) has biased composition (basic and acidic residues). Polar residues predominate over residues 424–439 (SGASDSSSLPTYNVSG). 2 consecutive C2H2-type zinc fingers follow at residues 448-470 (YPCH…MGCH) and 476-500 (FECN…RGEH).

It belongs to the Ikaros C2H2-type zinc-finger protein family. Heterodimer and homodimer with other IKAROS family members. In terms of tissue distribution, expression is strongest in the blood, gills and intestine.

The protein localises to the nucleus. This chain is Ikaros family zinc finger protein, found in Myxine glutinosa (Atlantic hagfish).